Reading from the N-terminus, the 392-residue chain is Phosphoglycerate kinase (392 aa).

Substrate-binding positions include 21 to 23 (DMN), arginine 36, 59 to 62 (HLGR), arginine 114, and arginine 147. ATP contacts are provided by residues lysine 198, glutamate 320, and 346 to 349 (GGDT).

Belongs to the phosphoglycerate kinase family. As to quaternary structure, monomer.

It is found in the cytoplasm. It carries out the reaction (2R)-3-phosphoglycerate + ATP = (2R)-3-phospho-glyceroyl phosphate + ADP. The protein operates within carbohydrate degradation; glycolysis; pyruvate from D-glyceraldehyde 3-phosphate: step 2/5. The chain is Phosphoglycerate kinase from Neisseria meningitidis serogroup A / serotype 4A (strain DSM 15465 / Z2491).